We begin with the raw amino-acid sequence, 73 residues long: Translation initiation factor IF-1 (73 aa).

The 73-residue stretch at 1–73 (MAKKEDTLVL…TKARVVYRHR (73 aa)) folds into the S1-like domain.

The protein belongs to the IF-1 family. In terms of assembly, component of the 30S ribosomal translation pre-initiation complex which assembles on the 30S ribosome in the order IF-2 and IF-3, IF-1 and N-formylmethionyl-tRNA(fMet); mRNA recruitment can occur at any time during PIC assembly.

Its subcellular location is the cytoplasm. One of the essential components for the initiation of protein synthesis. Stabilizes the binding of IF-2 and IF-3 on the 30S subunit to which N-formylmethionyl-tRNA(fMet) subsequently binds. Helps modulate mRNA selection, yielding the 30S pre-initiation complex (PIC). Upon addition of the 50S ribosomal subunit IF-1, IF-2 and IF-3 are released leaving the mature 70S translation initiation complex. The chain is Translation initiation factor IF-1 from Chlamydia pneumoniae (Chlamydophila pneumoniae).